The primary structure comprises 293 residues: MTLIDGKAISEQVKQEIAAEVAEIVARGGKRPHLAAILVGHDGGSETYVAAKVKACEVCGFKSSLIRYESDVTEEELLAKVRELNNDDDVDGFIVQLPLPKHISEQKVIETIDYRKDVDGFHPINVGRMSIGLPCYVSATPNGILELLKRYEIETSGKKCVVLGRSNIVGKPMASLMMQKAYPGDATVTVCHSRSKDLVKECQEADIIIAALGQPNFVKEEMVKEGAVVIDVGTTRVPDASKKSGFKLTGDVKFDEVAPKCSFITPVPGGVGPMTIVSLMKNTLLAGKKAIYK.

NADP(+) contacts are provided by residues 164 to 166 (GRS), serine 193, and threonine 234.

Belongs to the tetrahydrofolate dehydrogenase/cyclohydrolase family. As to quaternary structure, homodimer.

It catalyses the reaction (6R)-5,10-methylene-5,6,7,8-tetrahydrofolate + NADP(+) = (6R)-5,10-methenyltetrahydrofolate + NADPH. It carries out the reaction (6R)-5,10-methenyltetrahydrofolate + H2O = (6R)-10-formyltetrahydrofolate + H(+). Its pathway is one-carbon metabolism; tetrahydrofolate interconversion. Its function is as follows. Catalyzes the oxidation of 5,10-methylenetetrahydrofolate to 5,10-methenyltetrahydrofolate and then the hydrolysis of 5,10-methenyltetrahydrofolate to 10-formyltetrahydrofolate. The sequence is that of Bifunctional protein FolD from Bacteroides thetaiotaomicron (strain ATCC 29148 / DSM 2079 / JCM 5827 / CCUG 10774 / NCTC 10582 / VPI-5482 / E50).